The following is a 1345-amino-acid chain: Vascular endothelial growth factor receptor 2 (1345 aa).

The first 19 residues, 1–19 (MESKALLAVALWFCVETRA), serve as a signal peptide directing secretion. Residues 20–762 (ASVGLPGDFL…EGAQEKTNLE (743 aa)) lie on the Extracellular side of the membrane. N-linked (GlcNAc...) asparagine glycosylation is found at asparagine 46, asparagine 98, asparagine 145, asparagine 160, and asparagine 247. Ig-like C2-type domains are found at residues 46-111 (NTTL…RDVD), 143-209 (NKNK…INDE), 226-325 (YDVI…TFVR), 330-416 (PFIA…HMVS), 423-542 (PQIG…RVIS), 549-656 (PEIT…LVKQ), and 665-751 (PMIT…TLFI). A disulfide bridge connects residues cysteine 53 and cysteine 105. A disulfide bond links cysteine 152 and cysteine 202. Cysteine 248 and cysteine 309 are disulfide-bonded. Asparagine 320, asparagine 376, asparagine 397, asparagine 509, asparagine 521, asparagine 578, asparagine 611, asparagine 617, asparagine 629, asparagine 673, asparagine 702, and asparagine 719 each carry an N-linked (GlcNAc...) asparagine glycan. Intrachain disulfides connect cysteine 447-cysteine 528 and cysteine 569-cysteine 640. The cysteines at positions 686 and 735 are disulfide-linked. A helical membrane pass occupies residues 763–783 (VIILVGTAVIAMFFWLLLVIV). The Cytoplasmic segment spans residues 784–1345 (LRTVKRANEG…SGTTLRSPPV (562 aa)). Tyrosine 799 is modified (phosphotyrosine). Residues 832–1160 (LKLGKPLGRG…FSELVEHLGN (329 aa)) form the Protein kinase domain. ATP-binding positions include 838-846 (LGRGAFGQV) and lysine 866. Tyrosine 949 bears the Phosphotyrosine; by autocatalysis mark. A phosphoserine mark is found at serine 980 and serine 982. Tyrosine 994 is subject to Phosphotyrosine; by autocatalysis. Cysteine 1022 and cysteine 1043 are disulfide-bonded. The active-site Proton acceptor is the aspartate 1026. Tyrosine 1052, tyrosine 1057, tyrosine 1173, and tyrosine 1212 each carry phosphotyrosine; by autocatalysis. 2 positions are modified to phosphoserine: serine 1229 and serine 1233. Threonine 1236 carries the phosphothreonine modification. A disordered region spans residues 1272–1316 (DRNKLSPSFGGMMPSKSRESVASEGSNQTSGYQSGYHSDDTDTTV). Over residues 1294 to 1307 (SEGSNQTSGYQSGY) the composition is skewed to polar residues. 3 positions are modified to phosphotyrosine; by autocatalysis: tyrosine 1303, tyrosine 1307, and tyrosine 1317.

Belongs to the protein kinase superfamily. Tyr protein kinase family. CSF-1/PDGF receptor subfamily. As to quaternary structure, homodimer in the presence of bound dimeric VEGFA, VEGFC or VEGFD ligands; monomeric in the absence of bound ligands. Can also form heterodimers with FLT1/VEGFR1 and KDR/VEGFR2. Interacts (tyrosine phosphorylated) with LFYN, NCK1, PLCG1. Interacts (tyrosine-phosphorylated active form preferentially) with DAB2IP (via C2 domain and active form preferentially); the interaction occurs at the late phase of VEGFA response and inhibits KDR/VEGFR2 activity. Interacts with SHBSH2D2A/TSAD, GRB2, MYOF, CBL and PDCD6. Interacts (via C-terminus domain) with ERN1 (via kinase domain); the interaction is facilitated in a XBP1 isoform 1- and vascular endothelial growth factor (VEGF)-dependent manner in endothelial cells. Interacts (via juxtamembrane region) with chaperone PDCL3 (via thioredoxin fold region); the interaction leads to increased KDR/VEGFR2 abundance through inhibition of its ubiquitination and degradation. Interacts (tyrosine phosphorylated) with CCDC88A/GIV (via SH2-like region); binding requires autophosphorylation of the KDR/VEGFR2 C-terminal region. Interacts with isoform 2 of BSG. Interacts with SLC31A1; this interaction is induced upon VEGFA stimulation leading to SLC31A1 and KDR subsequent co-internalization to early endosomes, thereby activating KDR downstream signaling in endothelial cells. Post-translationally, N-glycosylated. Ubiquitinated. Tyrosine phosphorylation of the receptor promotes its poly-ubiquitination, leading to its degradation via the proteasome or lysosomal proteases. In terms of processing, autophosphorylated on tyrosine residues upon ligand binding. Autophosphorylation occurs in trans, i.e. one subunit of the dimeric receptor phosphorylates tyrosine residues on the other subunit. Phosphorylation at Tyr-949 is important for interaction with SH2D2A/TSAD and VEGFA-mediated reorganization of the actin cytoskeleton. Phosphorylation at Tyr-1173 is important for interaction with PLCG1 and SHB. Phosphorylation at Tyr-1212 is important for interaction with NCK1 and FYN. Dephosphorylated by PTPRJ at Tyr-799, Tyr-949, Tyr-994, Tyr-1052, Tyr-1057, Tyr-1173 and Tyr-1212. Post-translationally, the inhibitory disulfide bond between Cys-1022 and Cys-1043 may serve as a specific molecular switch for H(2)S-induced modification that regulates KDR/VEGFR2 function. In terms of tissue distribution, expressed in endothelial cells (at protein level). Detected in embryonic endothelial cells, as well as hematopoietic stem and progenitor cells. Detected in vascular endothelium. Expressed at high levels in adult heart, lung, kidney, brain and skeletal muscle, but is also expressed at lower levels in most other adult tissues.

The protein localises to the cell junction. The protein resides in the endoplasmic reticulum. Its subcellular location is the cell membrane. It is found in the cytoplasm. It localises to the nucleus. The protein localises to the cytoplasmic vesicle. The protein resides in the early endosome. Its subcellular location is the secreted. The catalysed reaction is L-tyrosyl-[protein] + ATP = O-phospho-L-tyrosyl-[protein] + ADP + H(+). Its activity is regulated as follows. Present in an inactive conformation in the absence of bound ligand. Binding of VEGFA, VEGFC or VEGFD leads to dimerization and activation by autophosphorylation on tyrosine residues. May be regulated by hydrogen sulfide (H(2)S) levels via a sensitive intracellular disulfide bond. Functionally, tyrosine-protein kinase that acts as a cell-surface receptor for VEGFA, VEGFC and VEGFD. Plays an essential role in the regulation of angiogenesis, vascular development, vascular permeability, and embryonic hematopoiesis. Promotes proliferation, survival, migration and differentiation of endothelial cells. Promotes reorganization of the actin cytoskeleton. Isoforms lacking a transmembrane domain, such as isoform 2, may function as decoy receptors for VEGFA, VEGFC and/or VEGFD. Isoform 2 plays an important role as a negative regulator of VEGFA- and VEGFC-mediated lymphangiogenesis by limiting the amount of free VEGFA and/or VEGFC and by preventing their binding to FLT4. Modulates FLT1 and FLT4 signaling by forming heterodimers. Binding of vascular growth factors to isoform 1 leads to the activation of several signaling cascades. Activation of PLCG1 leads to the production of the cellular signaling molecules diacylglycerol and inositol 1,4,5-trisphosphate and the activation of protein kinase C. Mediates activation of MAPK1/ERK2, MAPK3/ERK1 and the MAP kinase signaling pathway, as well as of the AKT1 signaling pathway. Mediates phosphorylation of PIK3R1, the regulatory subunit of phosphatidylinositol 3-kinase, reorganization of the actin cytoskeleton and activation of PTK2/FAK1. Required for VEGFA-mediated induction of NOS2 and NOS3, leading to the production of the signaling molecule nitric oxide (NO) by endothelial cells. Phosphorylates PLCG1. Promotes phosphorylation of FYN, NCK1, NOS3, PIK3R1, PTK2/FAK1 and SRC. The sequence is that of Vascular endothelial growth factor receptor 2 from Mus musculus (Mouse).